The following is a 133-amino-acid chain: Protein PsiE homolog (133 aa).

A run of 4 helical transmembrane segments spans residues 13–33 (LQWI…IFLI), 55–75 (VESI…IKYF), 81–101 (FPLR…IIVS), and 105–125 (PMET…LYIS).

It belongs to the PsiE family.

The protein localises to the cell membrane. The protein is Protein PsiE homolog of Bacillus cereus (strain ATCC 10987 / NRS 248).